The following is a 181-amino-acid chain: Probable GTP-binding protein EngB (181 aa).

The EngB-type G domain maps to 18 to 181 (PKNEICFVGR…LQDLVNNLFN (164 aa)). GTP is bound by residues 26-33 (GRSNVGKS), 52-56 (GKTKL), 70-73 (DLPG), 137-140 (TKRD), and 164-166 (VSI). The Mg(2+) site is built by Ser-33 and Thr-54.

The protein belongs to the TRAFAC class TrmE-Era-EngA-EngB-Septin-like GTPase superfamily. EngB GTPase family. Mg(2+) serves as cofactor.

In terms of biological role, necessary for normal cell division and for the maintenance of normal septation. The polypeptide is Probable GTP-binding protein EngB (Mycoplasma mobile (strain ATCC 43663 / 163K / NCTC 11711) (Mesomycoplasma mobile)).